The following is a 394-amino-acid chain: Elongation factor Tu (394 aa).

Residues 10–204 (KPHVNVGTIG…YLDSYIPEPE (195 aa)) form the tr-type G domain. Residues 19–26 (GHVDHGKT) are G1. 19–26 (GHVDHGKT) contributes to the GTP binding site. Thr26 lines the Mg(2+) pocket. The segment at 60–64 (GITIN) is G2. A G3 region spans residues 81-84 (DCPG). Residues 81–85 (DCPGH) and 136–139 (NKCD) contribute to the GTP site. Residues 136–139 (NKCD) form a G4 region. Positions 174-176 (SAL) are G5.

The protein belongs to the TRAFAC class translation factor GTPase superfamily. Classic translation factor GTPase family. EF-Tu/EF-1A subfamily. In terms of assembly, monomer.

Its subcellular location is the cytoplasm. It catalyses the reaction GTP + H2O = GDP + phosphate + H(+). Its function is as follows. GTP hydrolase that promotes the GTP-dependent binding of aminoacyl-tRNA to the A-site of ribosomes during protein biosynthesis. This Pectobacterium atrosepticum (strain SCRI 1043 / ATCC BAA-672) (Erwinia carotovora subsp. atroseptica) protein is Elongation factor Tu.